The chain runs to 1144 residues: Adenylate cyclase type 3 (1144 aa).

Residues 1 to 79 are Cytoplasmic-facing; it reads MTEDQGFSDP…FKRQRHETLL (79 aa). Helical transmembrane passes span 80 to 100, 105 to 125, 139 to 159, 173 to 193, and 226 to 246; these read VLVV…AVVF, LAPL…FVLC, VPYL…GLNF, AFFV…IVII, and ILAN…SYYM. Mg(2+) is bound by residues aspartate 324, isoleucine 325, and aspartate 368. Residues 324 to 329 and 366 to 368 contribute to the ATP site; these read DIVGFT and LGD. The chain crosses the membrane as a helical span at residues 381–401; sequence EDHAVCSILMGLAMVEAISYV. Over 402 to 630 the chain is Cytoplasmic; it reads REKTKTGVDM…RYSVEKEKQS (229 aa). Arginine 412 is an ATP binding site. Lysine 465 participates in a covalent cross-link: Glycyl lysine isopeptide (Lys-Gly) (interchain with G-Cter in SUMO3). Residues 504–563 form a disordered region; that stretch reads QNGLNGSALPNGAPASKPSSPALIETKEPNGSAHASGSTSEEAEEQEAQADNPSFPNPRR. Position 523 is a phosphoserine (serine 523). Residues 534 to 543 are compositionally biased toward low complexity; it reads GSAHASGSTS. Serine 578 carries the phosphoserine modification. The next 3 membrane-spanning stretches (helical) occupy residues 631–651, 662–682, and 706–726; these read GAAF…EILI, FVVG…AIFP, and WAML…LSCL. Asparagine 734 carries an N-linked (GlcNAc...) asparagine glycan. Helical transmembrane passes span 755 to 775, 777 to 797, and 833 to 853; these read VAVL…MVKL, LMLL…CPVF, and LPLV…MLSF. The Cytoplasmic segment spans residues 854–1144; sequence YYFSRHVEKL…TLPHQVVDNP (291 aa). ATP is bound by residues lysine 975, 1062 to 1064, and 1069 to 1073; these read DIW and NVASR. Serine 1076 is subject to Phosphoserine; by CaMK2. Lysine 1109 provides a ligand contact to ATP.

Belongs to the adenylyl cyclase class-4/guanylyl cyclase family. Mg(2+) serves as cofactor. The cofactor is Mn(2+). N-glycosylated. Post-translationally, sumoylated. Sumoylation is required for targeting ot olfactory cilia. In terms of processing, rapidly phosphorylated after stimulation by odorants or forskolin. Phosphorylation by CaMK2 at Ser-1076 down-regulates enzyme activity. Detected on cilia on the olfactory epithelium (at protein level). Detected on cilia on the olfactory epithelium.

The protein localises to the cell membrane. The protein resides in the golgi apparatus. It localises to the cell projection. Its subcellular location is the cilium. It is found in the cytoplasm. It catalyses the reaction ATP = 3',5'-cyclic AMP + diphosphate. With respect to regulation, specifically activated by the G alpha protein GNAL/G(olf) in signaling cascades triggered by odorant receptors. Activated by forskolin. After forskolin treatment, activity is further increased by calcium/calmodulin. In the absence of forskolin, calcium/calmodulin has little effect on enzyme activity. Its function is as follows. Catalyzes the formation of the signaling molecule cAMP in response to G-protein signaling. Participates in signaling cascades triggered by odorant receptors via its function in cAMP biosynthesis: specifically activated by G alpha protein GNAL/G(olf) in olfactory epithelium. Required for the perception of odorants. Required for normal sperm motility and normal male fertility. Plays a role in regulating insulin levels and body fat accumulation in response to a high fat diet. This Rattus norvegicus (Rat) protein is Adenylate cyclase type 3.